A 331-amino-acid chain; its full sequence is Ribosomal RNA small subunit methyltransferase C (331 aa).

Belongs to the methyltransferase superfamily. RsmC family. In terms of assembly, monomer.

Its subcellular location is the cytoplasm. It catalyses the reaction guanosine(1207) in 16S rRNA + S-adenosyl-L-methionine = N(2)-methylguanosine(1207) in 16S rRNA + S-adenosyl-L-homocysteine + H(+). In terms of biological role, specifically methylates the guanine in position 1207 of 16S rRNA in the 30S particle. This Ectopseudomonas mendocina (strain ymp) (Pseudomonas mendocina) protein is Ribosomal RNA small subunit methyltransferase C.